The primary structure comprises 2207 residues: Genome polyprotein (2207 aa).

The N-myristoyl glycine; by host moiety is linked to residue glycine 2. Residues 2–1518 (GAQVSSQKVG…NINRAMTILQ (1517 aa)) are Cytoplasmic-facing. An amphipathic alpha-helix region spans residues 579-599 (GLGDLIEGVVEGVTRNALTPL). A compositionally biased stretch (polar residues) spans 597–613 (TPLTPANNLPDTQSSGP). Disordered regions lie at residues 597-620 (TPLT…KETP) and 628-647 (GATN…VIQK). Active-site for protease 2A activity residues include histidine 899 and aspartate 917. Residues cysteine 934 and cysteine 936 each coordinate Zn(2+). Cysteine 988 acts as the For protease 2A activity in catalysis. The Zn(2+) site is built by cysteine 994 and histidine 996. The segment at 1126 to 1198 (GDSWLKKFTE…HQSCPSQEHQ (73 aa)) is membrane-binding. The segment at 1126–1264 (GDSWLKKFTE…SPGTGKSVAT (139 aa)) is oligomerization. An RNA-binding region spans residues 1147–1151 (SNKIS). An SF3 helicase domain is found at 1230 to 1386 (EHTINNYVQF…SEYSRDGKLN (157 aa)). 1254–1261 (GSPGTGKS) lines the ATP pocket. The Zn(2+) site is built by cysteine 1394, cysteine 1397, cysteine 1406, and cysteine 1411. A C4-type zinc finger spans residues 1394–1411 (CKNCHHPANFKRCCPLVC). The interval 1438 to 1445 (ERNRRSSI) is RNA-binding. Residues 1449–1454 (MEALFQ) are oligomerization. An intramembrane segment occupies 1519-1534 (AVTTFAAVAGVVYVMY). At 1535–2207 (KLFAGHQGAY…TLYRRWLDSF (673 aa)) the chain is on the cytoplasmic side. Tyrosine 1544 carries the post-translational modification O-(5'-phospho-RNA)-tyrosine. The 179-residue stretch at 1564–1742 (GPGFDYAVAM…FAAALKRSYF (179 aa)) folds into the Peptidase C3 domain. Residues histidine 1603, glutamate 1634, and cysteine 1710 each act as for protease 3C activity in the active site. Residues 1973–2088 (EKLFAFDYTG…SYPHEVDASL (116 aa)) enclose the RdRp catalytic domain. Positions 1979 and 2074 each coordinate Mg(2+).

Belongs to the picornaviruses polyprotein family. In terms of assembly, interacts with capsid protein VP1 and capsid protein VP3 to form heterotrimeric protomers. As to quaternary structure, interacts with capsid protein VP0, and capsid protein VP3 to form heterotrimeric protomers. Interacts with human PVR. Five protomers subsequently associate to form pentamers which serve as building blocks for the capsid. Interacts with capsid protein VP2, capsid protein VP3 and capsid protein VP4 following cleavage of capsid protein VP0. Interacts with capsid protein VP1 and capsid protein VP3 in the mature capsid. In terms of assembly, interacts with capsid protein VP0 and capsid protein VP1 to form heterotrimeric protomers. Five protomers subsequently associate to form pentamers which serve as building blocks for the capsid. Interacts with capsid protein VP4 in the mature capsid. Interacts with protein 2C; this interaction may be important for virion morphogenesis. As to quaternary structure, interacts with capsid protein VP1 and capsid protein VP3. Homodimer. In terms of assembly, homohexamer; forms a hexameric ring structure with 6-fold symmetry characteristic of AAA+ ATPases. Interacts (via N-terminus) with host RTN3 (via reticulon domain); this interaction is important for viral replication. Interacts with capsid protein VP3; this interaction may be important for virion morphogenesis. As to quaternary structure, interacts with protein 3CD. Homodimer. Interacts with host GBF1. Interacts (via GOLD domain) with host ACBD3 (via GOLD domain); this interaction allows the formation of a viral protein 3A/ACBD3 heterotetramer with a 2:2 stoichiometry, which will stimulate the recruitment of host PI4KB in order to synthesize PI4P at the viral RNA replication sites. In terms of assembly, interacts with RNA-directed RNA polymerase. As to quaternary structure, interacts with protein 3AB and with RNA-directed RNA polymerase. Interacts with Viral protein genome-linked and with protein 3CD. Requires Mg(2+) as cofactor. Specific enzymatic cleavages in vivo by the viral proteases yield processing intermediates and the mature proteins. In terms of processing, myristoylation is required for the formation of pentamers during virus assembly. Further assembly of 12 pentamers and a molecule of genomic RNA generates the provirion. Post-translationally, during virion maturation, immature virions are rendered infectious following cleavage of VP0 into VP4 and VP2. This maturation seems to be an autocatalytic event triggered by the presence of RNA in the capsid and it is followed by a conformational change infectious virion. Myristoylation is required during RNA encapsidation and formation of the mature virus particle. In terms of processing, VPg is uridylylated by the polymerase into VPg-pUpU. This acts as a nucleotide-peptide primer for the genomic RNA replication.

It localises to the virion. The protein localises to the host cytoplasm. Its subcellular location is the host cytoplasmic vesicle membrane. It is found in the host nucleus. The catalysed reaction is a ribonucleoside 5'-triphosphate + H2O = a ribonucleoside 5'-diphosphate + phosphate + H(+). It catalyses the reaction Selective cleavage of Tyr-|-Gly bond in the picornavirus polyprotein.. It carries out the reaction RNA(n) + a ribonucleoside 5'-triphosphate = RNA(n+1) + diphosphate. The enzyme catalyses Selective cleavage of Gln-|-Gly bond in the poliovirus polyprotein. In other picornavirus reactions Glu may be substituted for Gln, and Ser or Thr for Gly.. With respect to regulation, replication or transcription is subject to high level of random mutations by the nucleotide analog ribavirin. Forms an icosahedral capsid of pseudo T=3 symmetry with capsid proteins VP2 and VP3. The capsid is 300 Angstroms in diameter, composed of 60 copies of each capsid protein and enclosing the viral positive strand RNA genome. Capsid protein VP1 mainly forms the vertices of the capsid. Capsid protein VP1 interacts with host cell receptor PVR to provide virion attachment to target host cells. This attachment induces virion internalization predominantly through clathrin- and caveolin-independent endocytosis in Hela cells and through caveolin-mediated endocytosis in brain microvascular endothelial cells. Tyrosine kinases are probably involved in the entry process. Virus binding to PVR induces increased junctional permeability and rearrangement of junctional proteins. Modulation of endothelial tight junctions, as well as cytolytic infection of endothelial cells themselves, may result in loss of endothelial integrity which may help the virus to reach the CNS. After binding to its receptor, the capsid undergoes conformational changes. Capsid protein VP1 N-terminus (that contains an amphipathic alpha-helix) and capsid protein VP4 are externalized. Together, they shape a pore in the host membrane through which viral genome is translocated to host cell cytoplasm. In terms of biological role, forms an icosahedral capsid of pseudo T=3 symmetry with capsid proteins VP2 and VP3. The capsid is 300 Angstroms in diameter, composed of 60 copies of each capsid protein and enclosing the viral positive strand RNA genome. Functionally, lies on the inner surface of the capsid shell. After binding to the host receptor, the capsid undergoes conformational changes. Capsid protein VP4 is released, Capsid protein VP1 N-terminus is externalized, and together, they shape a pore in the host membrane through which the viral genome is translocated into the host cell cytoplasm. Its function is as follows. Component of immature procapsids, which is cleaved into capsid proteins VP4 and VP2 after maturation. Allows the capsid to remain inactive before the maturation step. Cysteine protease that cleaves viral polyprotein and specific host proteins. It is responsible for the autocatalytic cleavage between the P1 and P2 regions, which is the first cleavage occurring in the polyprotein. Also cleaves the host translation initiation factor EIF4G1, in order to shut down the capped cellular mRNA translation. Inhibits the host nucleus-cytoplasm protein and RNA trafficking by cleaving host members of the nuclear pores including NUP98, NUP62 and NUP153. Counteracts stress granule formation probably by antagonizing its assembly or promoting its dissassembly. Cleaves and inhibits host IFIH1/MDA5, thereby inhibiting the type-I IFN production and the establishment of the antiviral state. Cleaves and inhibits host MAVS, thereby inhibiting the type-I IFN production and the establishment of the antiviral state. In terms of biological role, plays an essential role in the virus replication cycle by acting as a viroporin. Creates a pore in the host endoplasmic reticulum and as a consequence releases Ca2+ in the cytoplasm of infected cell. In turn, high levels of cytoplasmic calcium may trigger membrane trafficking and transport of viral ER-associated proteins to viroplasms, sites of viral genome replication. Functionally, induces and associates with structural rearrangements of intracellular membranes. Displays RNA-binding, nucleotide binding and NTPase activities. May play a role in virion morphogenesis and viral RNA encapsidation by interacting with the capsid protein VP3. Its function is as follows. Localizes the viral replication complex to the surface of membranous vesicles. Together with protein 3CD binds the Cis-Active RNA Element (CRE) which is involved in RNA synthesis initiation. Acts as a cofactor to stimulate the activity of 3D polymerase, maybe through a nucleid acid chaperone activity. Localizes the viral replication complex to the surface of membranous vesicles. It inhibits host cell endoplasmic reticulum-to-Golgi apparatus transport and causes the disassembly of the Golgi complex, possibly through GBF1 interaction. This would result in depletion of MHC, trail receptors and IFN receptors at the host cell surface. Plays an essential role in viral RNA replication by recruiting ACBD3 and PI4KB at the viral replication sites, thereby allowing the formation of the rearranged membranous structures where viral replication takes place. In terms of biological role, acts as a primer for viral RNA replication and remains covalently bound to viral genomic RNA. VPg is uridylylated prior to priming replication into VPg-pUpU. The oriI viral genomic sequence may act as a template for this. The VPg-pUpU is then used as primer on the genomic RNA poly(A) by the RNA-dependent RNA polymerase to replicate the viral genome. During genome replication, the VPg-RNA linkage is removed by the host TDP2, thereby accelerating replication. During the late stage of the replication cycle, host TDP2 is excluded from sites of viral RNA synthesis and encapsidation, allowing for the generation of progeny virions. Functionally, involved in the viral replication complex and viral polypeptide maturation. It exhibits protease activity with a specificity and catalytic efficiency that is different from protease 3C. Protein 3CD lacks polymerase activity. Protein 3CD binds to the 5'UTR of the viral genome. Its function is as follows. Major viral protease that mediates proteolytic processing of the polyprotein. Cleaves host EIF5B, contributing to host translation shutoff. Also cleaves host PABPC1, contributing to host translation shutoff. Cleaves host RIGI and thus contributes to the inhibition of type I interferon production. Cleaves host NLRP1, triggers host N-glycine-mediated degradation of the autoinhibitory NLRP1 N-terminal fragment. Inhibits the integrated stress response (ISR) in the infected cell by cleaving host G3BP1. Stress granule formation is thus inhibited, which allows protein synthesis and viral replication. Replicates the viral genomic RNA on the surface of intracellular membranes. May form linear arrays of subunits that propagate along a strong head-to-tail interaction called interface-I. Covalently attaches UMP to a tyrosine of VPg, which is used to prime RNA synthesis. The positive stranded RNA genome is first replicated at virus induced membranous vesicles, creating a dsRNA genomic replication form. This dsRNA is then used as template to synthesize positive stranded RNA genomes. ss(+)RNA genomes are either translated, replicated or encapsidated. In Homo sapiens (Human), this protein is Genome polyprotein.